A 103-amino-acid chain; its full sequence is Large ribosomal subunit protein bL21 (103 aa).

It belongs to the bacterial ribosomal protein bL21 family. As to quaternary structure, part of the 50S ribosomal subunit. Contacts protein L20.

Its function is as follows. This protein binds to 23S rRNA in the presence of protein L20. This chain is Large ribosomal subunit protein bL21, found in Brevibacillus brevis (strain 47 / JCM 6285 / NBRC 100599).